The following is a 213-amino-acid chain: Pyridoxine/pyridoxamine 5'-phosphate oxidase (213 aa).

Substrate-binding positions include 9 to 12 (RKSY) and Lys67. FMN contacts are provided by residues 62-67 (RVVLIK), 77-78 (YT), Arg83, and Lys84. 3 residues coordinate substrate: Tyr124, Arg128, and Ser132. FMN is bound by residues 141–142 (QS) and Trp185. 191–193 (RLH) lines the substrate pocket. Residue Arg195 coordinates FMN.

This sequence belongs to the pyridoxamine 5'-phosphate oxidase family. Homodimer. It depends on FMN as a cofactor.

It catalyses the reaction pyridoxamine 5'-phosphate + O2 + H2O = pyridoxal 5'-phosphate + H2O2 + NH4(+). The catalysed reaction is pyridoxine 5'-phosphate + O2 = pyridoxal 5'-phosphate + H2O2. It functions in the pathway cofactor metabolism; pyridoxal 5'-phosphate salvage; pyridoxal 5'-phosphate from pyridoxamine 5'-phosphate: step 1/1. The protein operates within cofactor metabolism; pyridoxal 5'-phosphate salvage; pyridoxal 5'-phosphate from pyridoxine 5'-phosphate: step 1/1. Functionally, catalyzes the oxidation of either pyridoxine 5'-phosphate (PNP) or pyridoxamine 5'-phosphate (PMP) into pyridoxal 5'-phosphate (PLP). The polypeptide is Pyridoxine/pyridoxamine 5'-phosphate oxidase (Methylibium petroleiphilum (strain ATCC BAA-1232 / LMG 22953 / PM1)).